A 512-amino-acid chain; its full sequence is Polyamine oxidase 1 (512 aa).

The FAD site is built by glutamate 38 and arginine 46. Positions 448–470 (DRMAEPLPRGPDAAADERPPSPR) are disordered. Glutamate 476 serves as a coordination point for FAD.

It belongs to the flavin monoamine oxidase family. FAD is required as a cofactor.

The protein localises to the cytoplasm. The catalysed reaction is spermine + O2 + H2O = 3-aminopropanal + spermidine + H2O2. The enzyme catalyses N(1)-acetylspermine + O2 + H2O = 3-acetamidopropanal + spermidine + H2O2. It catalyses the reaction norspermine + O2 + H2O = norspermidine + 3-aminopropanal + H2O2. It carries out the reaction thermospermine + O2 + H2O = 3-aminopropanal + spermidine + H2O2. The protein operates within amine and polyamine degradation; spermine degradation. In terms of biological role, flavoenzyme involved in polyamine back-conversion. Catalyzes the oxidation of the secondary amino group of polyamines, such as spermine and its acetyl derivatives. Substrate preference is thermospermine &gt; spermine &gt; norspermine &gt; N(1)-acetylspermine. No activity detected when putrescine or spermidine are used as substrates. Plays an important role in the regulation of polyamine intracellular concentration. This Oryza sativa subsp. japonica (Rice) protein is Polyamine oxidase 1.